Consider the following 131-residue polypeptide: Profilin (131 aa).

The protein belongs to the profilin family. Occurs in many kinds of cells as a complex with monomeric actin in a 1:1 ratio.

It localises to the cytoplasm. It is found in the cytoskeleton. In terms of biological role, binds to actin and affects the structure of the cytoskeleton. At high concentrations, profilin prevents the polymerization of actin, whereas it enhances it at low concentrations. By binding to PIP2, it inhibits the formation of IP3 and DG. In Pyrus communis (Pear), this protein is Profilin.